Consider the following 25-residue polypeptide: Chrysophsin-2 (25 aa).

His-25 carries the histidine amide modification.

Gill.

Its subcellular location is the secreted. In terms of biological role, has antibacterial activity against Gram-positive bacteria B.subtilis ATCC 6633, L.garvieae ATCC 49156 and S.iniae F-8502, and Gram-negative bacteria E.coli WT-2, V.anguillarum ATCC 19264, V.penaeicida KHA, V.harveyi ATCC 14126, V.vulnificus ATCC 33148 and A.salmonicida NCMB 1102. Has hemolytic activity against human red blood cells. Seems to disrupt the membranes by adopting an alpha helical conformation. May play a significant role in innate host defense. The protein is Chrysophsin-2 of Pagrus major (Red sea bream).